A 317-amino-acid chain; its full sequence is Melanocyte-stimulating hormone receptor (317 aa).

Over 1 to 37 (MPMQGAQRRLLGSLNSTPTATPNLGLAANHTGAPCLE) the chain is Extracellular. N-linked (GlcNAc...) asparagine glycosylation is present at Asn29. Residues 38 to 63 (VSIPHGLFLSLGLVSLVENVLVVAAI) form a helical membrane-spanning segment. At 64-72 (AKNRNLHSP) the chain is on the cytoplasmic side. The helical transmembrane segment at 73–93 (MYCFICCLALSDLLVSGSNML) threads the bilayer. Over 94–118 (ETAVILLLEAGALATRASVVQQLQN) the chain is Extracellular. Residues 119–140 (TIDVLTCSSMLCSLCFLGAIAV) traverse the membrane as a helical segment. Residues 141–163 (DRYVSIFYALRYHSIVTLPRARR) are Cytoplasmic-facing. A helical transmembrane segment spans residues 164 to 183 (AIAAIWVASVLSSTLFIAYC). The Extracellular portion of the chain corresponds to 184–191 (DHAAVLLC). Residues 192-211 (LVVFFLAMLVLMAVLYVHML) traverse the membrane as a helical segment. Over 212–240 (ARACQHAQGITRLHKRQLPAHQGFGLRGA) the chain is Cytoplasmic. The helical transmembrane segment at 241 to 266 (ATLTILLGIFFLCWGPFFLHLMLVVL) threads the bilayer. The Extracellular portion of the chain corresponds to 267 to 279 (CPQHLTCSCIFKN). A helical membrane pass occupies residues 280–300 (FKVFLTLIICNTIIDPLIYAF). The Cytoplasmic segment spans residues 301–317 (RSQELCRTLKEVLLCSW). The S-palmitoyl cysteine moiety is linked to residue Cys315.

This sequence belongs to the G-protein coupled receptor 1 family. In terms of assembly, interacts with MGRN1, but does not undergo MGRN1-mediated ubiquitination; this interaction competes with GNAS-binding and thus inhibits agonist-induced cAMP production. Interacts with OPN3; the interaction results in a decrease in MC1R-mediated cAMP signaling and ultimately a decrease in melanin production in melanocytes.

It localises to the cell membrane. In terms of biological role, receptor for MSH (alpha, beta and gamma) and ACTH. The activity of this receptor is mediated by G proteins which activate adenylate cyclase. Mediates melanogenesis, the production of eumelanin (black/brown) and phaeomelanin (red/yellow), via regulation of cAMP signaling in melanocytes. The sequence is that of Melanocyte-stimulating hormone receptor (MC1R) from Alouatta caraya (Black howler monkey).